Here is a 261-residue protein sequence, read N- to C-terminus: MRIALGIEYDGNGYFGWQRQAEVDSVQGQLERALSIVANEPIGVFCAGRTDAGVHATGQVVHFETNAIRNEGAWTLGVNANLPDNIAVRWVKEVDDSFHARFSATARRYRYVIYNHSFRPGILRHGVSHYHGDIDADRMHQAAQALLGEQDFTSFRAVQCQSKTPFRNVHCVNVTRQGMYVIVDIAANAFLHHMVRNIVGSLLEIGLGNQPLTWMGDLLALKDRNQAAATAKPHGLYLVDVTYPEQYQLPKLALGPLFMLD.

D51 serves as the catalytic Nucleophile. Residue Y109 participates in substrate binding.

It belongs to the tRNA pseudouridine synthase TruA family. As to quaternary structure, homodimer.

The enzyme catalyses uridine(38/39/40) in tRNA = pseudouridine(38/39/40) in tRNA. In terms of biological role, formation of pseudouridine at positions 38, 39 and 40 in the anticodon stem and loop of transfer RNAs. The polypeptide is tRNA pseudouridine synthase A (Shewanella baltica (strain OS185)).